Here is a 388-residue protein sequence, read N- to C-terminus: Succinate--CoA ligase [ADP-forming] subunit beta (388 aa).

One can recognise an ATP-grasp domain in the interval 9–244; the sequence is KQLFAEYGLP…PSQDDPREAH (236 aa). ATP-binding positions include K46, 53-55, E99, T102, and E107; that span reads GRG. Mg(2+)-binding residues include N199 and D213. Residues N264 and 321–323 contribute to the substrate site; that span reads GIV.

This sequence belongs to the succinate/malate CoA ligase beta subunit family. As to quaternary structure, heterotetramer of two alpha and two beta subunits. Mg(2+) serves as cofactor.

It carries out the reaction succinate + ATP + CoA = succinyl-CoA + ADP + phosphate. It catalyses the reaction GTP + succinate + CoA = succinyl-CoA + GDP + phosphate. It functions in the pathway carbohydrate metabolism; tricarboxylic acid cycle; succinate from succinyl-CoA (ligase route): step 1/1. Functionally, succinyl-CoA synthetase functions in the citric acid cycle (TCA), coupling the hydrolysis of succinyl-CoA to the synthesis of either ATP or GTP and thus represents the only step of substrate-level phosphorylation in the TCA. The beta subunit provides nucleotide specificity of the enzyme and binds the substrate succinate, while the binding sites for coenzyme A and phosphate are found in the alpha subunit. The chain is Succinate--CoA ligase [ADP-forming] subunit beta from Pseudomonas putida (strain GB-1).